Reading from the N-terminus, the 309-residue chain is Probable 5-dehydro-4-deoxyglucarate dehydratase (309 aa).

The protein belongs to the DapA family.

The enzyme catalyses 5-dehydro-4-deoxy-D-glucarate + H(+) = 2,5-dioxopentanoate + CO2 + H2O. It participates in carbohydrate acid metabolism; D-glucarate degradation; 2,5-dioxopentanoate from D-glucarate: step 2/2. In Saccharopolyspora erythraea (strain ATCC 11635 / DSM 40517 / JCM 4748 / NBRC 13426 / NCIMB 8594 / NRRL 2338), this protein is Probable 5-dehydro-4-deoxyglucarate dehydratase.